A 146-amino-acid chain; its full sequence is Hemoglobin subunit beta (146 aa).

A Globin domain is found at 2 to 146 (EWTDFERATI…VVNSLGRQYH (145 aa)). Heme b-binding residues include H63 and H92.

It belongs to the globin family. As to quaternary structure, heterotetramer of two alpha chains and two beta chains. Can form polymers. Red blood cells.

Its function is as follows. Involved in oxygen transport from gills to the various peripheral tissues. The sequence is that of Hemoglobin subunit beta (hbb) from Chelidonichthys kumu (Bluefin gurnard).